The sequence spans 871 residues: DNA mismatch repair protein MutS 1 (871 aa).

Residue 614 to 621 coordinates ATP; sequence GPNMSGKS.

It belongs to the DNA mismatch repair MutS family.

This protein is involved in the repair of mismatches in DNA. It is possible that it carries out the mismatch recognition step. This protein has a weak ATPase activity. The sequence is that of DNA mismatch repair protein MutS 1 from Halobacterium salinarum (strain ATCC 29341 / DSM 671 / R1).